A 70-amino-acid chain; its full sequence is Small ribosomal subunit protein bS21 (70 aa).

Belongs to the bacterial ribosomal protein bS21 family.

The sequence is that of Small ribosomal subunit protein bS21 from Neisseria gonorrhoeae (strain ATCC 700825 / FA 1090).